A 362-amino-acid polypeptide reads, in one-letter code: Serine/threonine-protein kinase SRK2E (362 aa).

Residues S7, S18, S29, and S43 each carry the phosphoserine; by autocatalysis modification. Residues 21–277 (YELVKDIGSG…IPEIRNHEWF (257 aa)) enclose the Protein kinase domain. 27–35 (IGSGNFGVA) is a binding site for ATP. K50 serves as a coordination point for ATP. D140 acts as the Proton acceptor in catalysis. The activation loop stretch occupies residues 160–186 (DFGYSKSSVLHSQPKSTVGTPAYIAPE). The residue at position 175 (S175) is a Phosphoserine. The tract at residues 283–318 (ADLMNDNTMTTQFDESDQPGQSIEEIMQIIAEATVP) is domain I; osmotic stress response, required for the kinase activity. Residues 319–362 (PAGTQNLNHYLTGSLDIDDDMEEDLESDLDDLDIDSSGEIVYAM) form a domain II; ABA response and ABI1 binding region.

It belongs to the protein kinase superfamily. Ser/Thr protein kinase family. In terms of assembly, interacts with ABI1, PP2CA and SLAC1. Interacts with B'ALPHA, B'BETA, B'DELTA, PP2AA2, PP2AA3, PP2A1 and PP2A2. Associates with MAPKKK18 within the nucleus. Interacts with I-2, TOPP1 and TOPP2. Interacts with ABI2. Autophosphorylation on residues Ser-7, Ser-18, Ser-29, Ser-43, Ser-175 and/or Thr-176. Only the phosphorylation of Ser-175 is crucial for the kinase activity. The phosphorylation of Ser-43 may repress the ABA signaling pathway in absence of ABA. In terms of tissue distribution, expressed in seedlings, leaves, flowers, stems, and roots, but restricted to guard cells and vascular tissue.

It is found in the nucleus. The catalysed reaction is L-seryl-[protein] + ATP = O-phospho-L-seryl-[protein] + ADP + H(+). The enzyme catalyses L-threonyl-[protein] + ATP = O-phospho-L-threonyl-[protein] + ADP + H(+). Kinase activity enhanced by ABA and low humidity. Repressed by PP2CA independently of its phosphatase activity. Probably inactivated by ABI1. Repressed by TOPP1. Negatively regulated by ABI2. Its function is as follows. Activator of the abscisic acid (ABA) signaling pathway that regulates numerous ABA responses, such as stomata closure in response to drought, darkness, high CO(2), plant pathogens, or decreases in atmospheric relative humidity (RH). Involved in the resistance to drought by avoiding water loss. Required for the stomata closure mediated by pathogen-associated molecular pattern (PAMPs) (e.g. flg22 and LPS) of pathogenic bacteria such as P.syringae pv. tomato (Pst) and E.coli O157:H7. As a plant defense process, stomata are closed transiently in order to limit invaders, but actively reopened by bacteria after a few hours; virulent strains (e.g. Pst DC3000) are more efficient than avirulent strains (e.g. Pst DC3000 AvrRpt2) in reopening stomata. Mediates the phosphorylation and activation of the S-type anion efflux channel SLAC1, and thus promotes stomata closure. Essential for stomatal closure in response to reactive oxygen species (ROS). Promotes MAPKKK18 activity upon abscisic acid (ABA) treatment. This chain is Serine/threonine-protein kinase SRK2E, found in Arabidopsis thaliana (Mouse-ear cress).